Consider the following 116-residue polypeptide: Vesicle-associated membrane protein 2 (116 aa).

Positions 1-33 are disordered; it reads MSATAATAPPAAPAGEGGPPAPPPNLTSNRRLQ. N-acetylserine is present on Ser2. Residues 2 to 94 lie on the Cytoplasmic side of the membrane; that stretch reads SATAATAPPA…KRKYWWKNLK (93 aa). The region spanning 31–91 is the v-SNARE coiled-coil homology domain; the sequence is RLQQTQAQVD…AKLKRKYWWK (61 aa). The required for interaction with SEPT8 stretch occupies residues 92-116; the sequence is NLKMMIILGVICAIILIIIIVYFSS. Residues 95–114 form a helical; Anchor for type IV membrane protein membrane-spanning segment; it reads MMIILGVICAIILIIIIVYF. Residues 115–116 lie on the Vesicular side of the membrane; that stretch reads SS.

Belongs to the synaptobrevin family. In terms of assembly, part of the SNARE core complex containing SNAP25, VAMP2 and STX1A; this complex constitutes the basic catalytic machinery of the complex neurotransmitter release apparatus. Recruited to the SNARE complex following binding of the SNARE complex component STX1A to STXBP1. This complex binds to CPLX1. Interacts with POPDC1 and STX4. Interacts with VAPA and VAPB. Interacts with WDFY2, PRKCZ and PRKCI. Forms a complex with WDFY2 and PRKCZ. Interacts (via N-terminus) with KCNB1 (via N-terminus and C-terminus); stimulates the channel inactivation rate of KCNB1. Interacts with SEPT8; the interaction inhibits interaction of VAMP2 with SYP. Interacts with SYP; the interaction is inhibited by interaction with SEPT8. Interacts with PICALM. Interacts with alpha-synuclein/SNCA. Interacts with STX3. Phosphorylated by PRKCZ in vitro and this phosphorylation is increased in the presence of WDFY2.

The protein localises to the cytoplasmic vesicle. Its subcellular location is the secretory vesicle. The protein resides in the synaptic vesicle membrane. It localises to the cell membrane. Its function is as follows. Involved in the targeting and/or fusion of transport vesicles to their target membrane. Major SNARE protein of synaptic vesicles which mediates fusion of synaptic vesicles to release neurotransmitters. Essential for fast vesicular exocytosis and activity-dependent neurotransmitter release as well as fast endocytosis that mediates rapid reuse of synaptic vesicles. Modulates the gating characteristics of the delayed rectifier voltage-dependent potassium channel KCNB1. The chain is Vesicle-associated membrane protein 2 (VAMP2) from Bos taurus (Bovine).